We begin with the raw amino-acid sequence, 685 residues long: uncharacterized protein (685 aa).

Disordered regions lie at residues 78-220 (AKQA…HIFD), 251-280 (TQNP…RNNE), 296-332 (DNNN…NNSE), and 459-657 (RNVK…NNKS). Residues 86 to 139 (KKKETENVEEEGEEKEKKIDDESFPDLLESTEKMKSELSKEKDKKKKQLKDGKK) are a coiled coil. Basic and acidic residues-rich tracts occupy residues 115-127 (STEK…SKEK) and 165-181 (FNDK…KKND). Residues 190 to 215 (NNQQNDMNNNNQNNQNNMNNNNNNNN) show a composition bias toward low complexity. Polar residues predominate over residues 263-276 (LTNNQGENNIPTDN). Low complexity predominate over residues 297-307 (NNNNNNNNNNN). The segment covering 308-331 (LGSAMNTPMNNMNKGGPRNNVNNS) has biased composition (polar residues). 2 stretches are compositionally biased toward low complexity: residues 460-474 (NVKN…GNTN) and 481-498 (NNRG…NNFN). Basic and acidic residues predominate over residues 499 to 515 (RRNDKNDNRNFRRKDID). The segment covering 520–530 (WRNTANPTQEE) has biased composition (polar residues). Positions 531–590 (NNNNMNHNNNYNNNNNNNNNNNNNNNNNNNTNHGKNFRNFNNLNNMKNNNSSNNKMMGMN) are enriched in low complexity. Over residues 591-602 (HMQQKGMNSSTG) the composition is skewed to polar residues. A compositionally biased stretch (low complexity) spans 617–656 (NNKMYKNNMGNANNNNNNNAVNTNFNNNNNNGNFHMNNNK).

This is an uncharacterized protein from Plasmodium falciparum (isolate 3D7).